Reading from the N-terminus, the 268-residue chain is Putative carbamate hydrolase RutD (268 aa).

Residues 15–119 enclose the AB hydrolase-1 domain; that stretch reads PVMVMIAGLG…VIVNGWLSLS (105 aa).

Belongs to the AB hydrolase superfamily. Hydrolase RutD family.

It carries out the reaction carbamate + 2 H(+) = NH4(+) + CO2. Functionally, involved in pyrimidine catabolism. May facilitate the hydrolysis of carbamate, a reaction that can also occur spontaneously. This Cronobacter sakazakii (strain ATCC BAA-894) (Enterobacter sakazakii) protein is Putative carbamate hydrolase RutD.